The primary structure comprises 148 residues: Large ribosomal subunit protein bL9 (148 aa).

The protein belongs to the bacterial ribosomal protein bL9 family.

Functionally, binds to the 23S rRNA. This Pseudomonas fluorescens (strain SBW25) protein is Large ribosomal subunit protein bL9.